The sequence spans 88 residues: Small ribosomal subunit protein uS17 (88 aa).

This sequence belongs to the universal ribosomal protein uS17 family. As to quaternary structure, part of the 30S ribosomal subunit.

Functionally, one of the primary rRNA binding proteins, it binds specifically to the 5'-end of 16S ribosomal RNA. The polypeptide is Small ribosomal subunit protein uS17 (Brevibacillus brevis (strain 47 / JCM 6285 / NBRC 100599)).